The following is a 245-amino-acid chain: Uridylate kinase (245 aa).

Residue Lys-12 to Gly-15 coordinates ATP. Positions Gly-20–Gly-25 are involved in allosteric activation by GTP. Residue Gly-54 coordinates UMP. Residues Gly-55 and Arg-59 each contribute to the ATP site. UMP contacts are provided by residues Asp-74 and Val-135–Thr-142. ATP contacts are provided by Asn-163, Tyr-169, and Asp-172.

This sequence belongs to the UMP kinase family. Homohexamer.

The protein resides in the cytoplasm. The enzyme catalyses UMP + ATP = UDP + ADP. Its pathway is pyrimidine metabolism; CTP biosynthesis via de novo pathway; UDP from UMP (UMPK route): step 1/1. With respect to regulation, allosterically activated by GTP. Inhibited by UTP. Catalyzes the reversible phosphorylation of UMP to UDP. This is Uridylate kinase from Streptococcus mutans serotype c (strain ATCC 700610 / UA159).